Consider the following 422-residue polypeptide: Phosphoribosylamine--glycine ligase (422 aa).

Residues 107 to 312 (KDVMAAAGVR…LGQLLHAAAT (206 aa)) form the ATP-grasp domain. 137 to 193 (GPPAGDPAWVVKDDRLAAGKGVVVTADRDVARAHGAALLEAGHPVLLESYLDGPEVS) is an ATP binding site. The Mg(2+) site is built by Glu-282 and Asn-284.

This sequence belongs to the GARS family. Mg(2+) serves as cofactor. Mn(2+) is required as a cofactor.

The catalysed reaction is 5-phospho-beta-D-ribosylamine + glycine + ATP = N(1)-(5-phospho-beta-D-ribosyl)glycinamide + ADP + phosphate + H(+). Its pathway is purine metabolism; IMP biosynthesis via de novo pathway; N(1)-(5-phospho-D-ribosyl)glycinamide from 5-phospho-alpha-D-ribose 1-diphosphate: step 2/2. The sequence is that of Phosphoribosylamine--glycine ligase from Mycobacterium bovis (strain ATCC BAA-935 / AF2122/97).